A 192-amino-acid polypeptide reads, in one-letter code: Peptide deformylase (192 aa).

Residues Cys-108 and His-150 each coordinate Fe cation. The active site involves Glu-151. His-154 lines the Fe cation pocket.

The protein belongs to the polypeptide deformylase family. Fe(2+) is required as a cofactor.

The catalysed reaction is N-terminal N-formyl-L-methionyl-[peptide] + H2O = N-terminal L-methionyl-[peptide] + formate. Removes the formyl group from the N-terminal Met of newly synthesized proteins. Requires at least a dipeptide for an efficient rate of reaction. N-terminal L-methionine is a prerequisite for activity but the enzyme has broad specificity at other positions. This Opitutus terrae (strain DSM 11246 / JCM 15787 / PB90-1) protein is Peptide deformylase.